A 1165-amino-acid polypeptide reads, in one-letter code: DNA-directed RNA polymerase subunit beta (1165 aa).

Belongs to the RNA polymerase beta chain family. In terms of assembly, the RNAP catalytic core consists of 2 alpha, 1 beta, 1 beta' and 1 omega subunit. When a sigma factor is associated with the core the holoenzyme is formed, which can initiate transcription.

It carries out the reaction RNA(n) + a ribonucleoside 5'-triphosphate = RNA(n+1) + diphosphate. DNA-dependent RNA polymerase catalyzes the transcription of DNA into RNA using the four ribonucleoside triphosphates as substrates. The chain is DNA-directed RNA polymerase subunit beta from Leifsonia xyli subsp. xyli (strain CTCB07).